The primary structure comprises 2499 residues: Probable polyketide synthase 22 (2499 aa).

The 420-residue stretch at 11–430 (DNQVAIVGLG…GSNACVLLSE (420 aa)) folds into the Ketosynthase family 3 (KS3) domain. Catalysis depends on for beta-ketoacyl synthase activity residues C177, H316, and H354. An acyl/malonyl transferases region spans residues 623-656 (GITPSIIVGHSLGEVASAFCSGMIDLETACFVIY). Residue S633 is the For acyl/malonyl transferase activity of the active site. The segment at 922-1044 (APINQLGNKN…SRILMKSLDV (123 aa)) is N-terminal hotdog fold. The region spanning 922-1209 (APINQLGNKN…IASTLSTKSE (288 aa)) is the PKS/mFAS DH domain. H956 acts as the Proton acceptor; for dehydratase activity in catalysis. The segment at 1059-1209 (NWSTLKREQL…IASTLSTKSE (151 aa)) is C-terminal hotdog fold. D1121 acts as the Proton donor; for dehydratase activity in catalysis. Residues 2414 to 2491 (EKEFSIRQDI…QIINIVTTKV (78 aa)) enclose the Carrier domain. S2451 bears the O-(pantetheine 4'-phosphoryl)serine mark.

Pantetheine 4'-phosphate is required as a cofactor.

Probable polyketide synthase. The sequence is that of Probable polyketide synthase 22 (pks22) from Dictyostelium discoideum (Social amoeba).